Consider the following 148-residue polypeptide: UPF0756 membrane protein YeaL (148 aa).

4 consecutive transmembrane segments (helical) span residues 14–34 (ALGFISHNTTVAVSILVLIIV), 51–71 (LTVGIIILTIGVMAPIASGTL), 86–106 (LVAIAVGVFVSWLGGRGVALM), and 121–141 (VLGVALFRGVPVGPLIAAGLV).

Belongs to the UPF0756 family.

It localises to the cell membrane. The chain is UPF0756 membrane protein YeaL from Salmonella arizonae (strain ATCC BAA-731 / CDC346-86 / RSK2980).